Consider the following 79-residue polypeptide: MSHKQIYYSDKYDDEEFEYRHVMLPKDIAKLVPKTHLMSESEWRNLGVQQSQGWVHYMIHEPEPHILLFRRPLPKKPKK.

Position 2 is an N-acetylserine (S2).

This sequence belongs to the CKS family. Forms a homohexamer that can probably bind six kinase subunits.

Functionally, binds to the catalytic subunit of the cyclin dependent kinases and is essential for their biological function. The sequence is that of Cyclin-dependent kinases regulatory subunit 1 (CKS1B) from Bos taurus (Bovine).